A 103-amino-acid chain; its full sequence is Small ribosomal subunit protein uS10 (103 aa).

It belongs to the universal ribosomal protein uS10 family. Part of the 30S ribosomal subunit.

Involved in the binding of tRNA to the ribosomes. This Saccharophagus degradans (strain 2-40 / ATCC 43961 / DSM 17024) protein is Small ribosomal subunit protein uS10.